Reading from the N-terminus, the 259-residue chain is Cysteine protease IpaJ (259 aa).

Residues Cys-64, His-206, and Asp-218 contribute to the active site.

The protein resides in the secreted. Its subcellular location is the host cytoplasm. Functionally, virulence factor that eliminates N-myristoyl protein modifications in infected host cells. Acts as a cysteine protease that cleaves the peptide bond between N-myristoylated Gly-2 and Asn-3 of human ARF1, leading to the elimination of the myristoyl group and alteration of protein trafficking in host cell. Could also cleave an array of N-myristoylated host proteins involved in cellular growth, signal transduction, autophagasome maturation and organelle function. This is Cysteine protease IpaJ (ipaJ) from Shigella flexneri.